We begin with the raw amino-acid sequence, 481 residues long: Cysteine--tRNA ligase (481 aa).

Residue Cys-43 participates in Zn(2+) binding. The short motif at 45–55 (ATVQGLPHIGH) is the 'HIGH' region element. Cys-221, His-246, and Glu-250 together coordinate Zn(2+). The 'KMSKS' region signature appears at 277-281 (KMSKS). An ATP-binding site is contributed by Lys-280.

Belongs to the class-I aminoacyl-tRNA synthetase family. As to quaternary structure, monomer. It depends on Zn(2+) as a cofactor.

The protein resides in the cytoplasm. The catalysed reaction is tRNA(Cys) + L-cysteine + ATP = L-cysteinyl-tRNA(Cys) + AMP + diphosphate. This Mycobacterium sp. (strain KMS) protein is Cysteine--tRNA ligase.